A 185-amino-acid polypeptide reads, in one-letter code: Probable RNA 2'-phosphotransferase (185 aa).

The protein belongs to the KptA/TPT1 family.

Removes the 2'-phosphate from RNA via an intermediate in which the phosphate is ADP-ribosylated by NAD followed by a presumed transesterification to release the RNA and generate ADP-ribose 1''-2''-cyclic phosphate (APPR&gt;P). May function as an ADP-ribosylase. The protein is Probable RNA 2'-phosphotransferase of Rhizobium rhizogenes (strain K84 / ATCC BAA-868) (Agrobacterium radiobacter).